The primary structure comprises 377 residues: MAGTDREKALDAALAQIERQFGKGAVMRLGERPNEPIEVIPTGSTALDVALGVGGLPRGRVVEVYGPESSGKTTLTLHAVANAQKAGGQVAFVDAEHALDPEYAKKLGVDIDNLILSQPDNGEQALEIVDMLVRSGALDLIVIDSVAALVPRAEIEGEMGDSHVGLQARLMSQALRKITSALNQSKTTAIFINQLREKIGVMFGSPETTTGGRALKFYASVRLDIRRIETLKDGTDAVGNRTRVKVVKNKVAPPFKQAEFDILYGQGISREGGLIDMGVENGFVRKAGAWYTYEGDQLGQGKENARNFLKDNPDLANEIEKKIKEKLGVGVRPEEPTAEPGADAAVTSAAAATDDTAKTVSAPAAKTTKSKAAAAKS.

66–73 (GPESSGKT) serves as a coordination point for ATP. Positions 329 to 377 (VGVRPEEPTAEPGADAAVTSAAAATDDTAKTVSAPAAKTTKSKAAAAKS) are disordered. Residues 342–377 (ADAAVTSAAAATDDTAKTVSAPAAKTTKSKAAAAKS) show a composition bias toward low complexity.

Belongs to the RecA family.

Its subcellular location is the cytoplasm. Its function is as follows. Can catalyze the hydrolysis of ATP in the presence of single-stranded DNA, the ATP-dependent uptake of single-stranded DNA by duplex DNA, and the ATP-dependent hybridization of homologous single-stranded DNAs. It interacts with LexA causing its activation and leading to its autocatalytic cleavage. The polypeptide is Protein RecA (Streptomyces avermitilis (strain ATCC 31267 / DSM 46492 / JCM 5070 / NBRC 14893 / NCIMB 12804 / NRRL 8165 / MA-4680)).